A 428-amino-acid polypeptide reads, in one-letter code: Beta-1,3-galactosyl-O-glycosyl-glycoprotein beta-1,6-N-acetylglucosaminyltransferase 4 (428 aa).

The Cytoplasmic portion of the chain corresponds to 1-12 (MRRCAVLHRLRC). The helical; Signal-anchor for type II membrane protein transmembrane segment at 13–30 (KFYVFVVSLFVVVKLVYL) threads the bilayer. Over 31 to 428 (KISMDNSIYI…QLQQCLRRVS (398 aa)) the chain is Lumenal. N-linked (GlcNAc...) asparagine glycosylation is present at Asn59. 4 disulfides stabilise this stretch: Cys60/Cys214, Cys148/Cys369, Cys169/Cys196, and Cys378/Cys410.

This sequence belongs to the glycosyltransferase 14 family.

Its subcellular location is the golgi apparatus membrane. It catalyses the reaction a 3-O-[beta-D-galactosyl-(1-&gt;3)-N-acetyl-alpha-D-galactosaminyl]-L-seryl-[protein] + UDP-N-acetyl-alpha-D-glucosamine = 3-O-{beta-D-galactosyl-(1-&gt;3)-[N-acetyl-beta-D-glucosaminyl-(1-&gt;6)]-N-acetyl-alpha-D-galactosaminyl}-L-seryl-[protein] + UDP + H(+). It carries out the reaction a 3-O-[beta-D-galactosyl-(1-&gt;3)-N-acetyl-alpha-D-galactosaminyl]-L-threonyl-[protein] + UDP-N-acetyl-alpha-D-glucosamine = a 3-O-{beta-D-galactosyl-(1-&gt;3)-[N-acetyl-beta-D-glucosaminyl-(1-&gt;6)]-N-acetyl-alpha-D-galactosaminyl}-L-threonyl-[protein] + UDP + H(+). The protein operates within protein modification; protein glycosylation. Its function is as follows. Glycosyltransferase that mediates core 2 O-glycan branching, an important step in mucin-type biosynthesis. The protein is Beta-1,3-galactosyl-O-glycosyl-glycoprotein beta-1,6-N-acetylglucosaminyltransferase 4 (gcnt4) of Danio rerio (Zebrafish).